The primary structure comprises 477 residues: Glycogen synthase (477 aa).

Lysine 15 is an ADP-alpha-D-glucose binding site.

Belongs to the glycosyltransferase 1 family. Bacterial/plant glycogen synthase subfamily.

The enzyme catalyses [(1-&gt;4)-alpha-D-glucosyl](n) + ADP-alpha-D-glucose = [(1-&gt;4)-alpha-D-glucosyl](n+1) + ADP + H(+). It participates in glycan biosynthesis; glycogen biosynthesis. In terms of biological role, synthesizes alpha-1,4-glucan chains using ADP-glucose. This is Glycogen synthase from Myxococcus xanthus (strain DK1622).